Consider the following 259-residue polypeptide: Putative cysteine-rich repeat secretory protein 25 (259 aa).

The N-terminal stretch at 1–31 is a signal peptide; sequence MSSSFLSRPLVSVYVFAMVTMQLLFMQSVLS. 2 consecutive Gnk2-homologous domains span residues 37–138 and 144–256; these read AYLN…SIYT and YRHI…LYPF.

Belongs to the cysteine-rich repeat secretory protein family.

It localises to the secreted. In Arabidopsis thaliana (Mouse-ear cress), this protein is Putative cysteine-rich repeat secretory protein 25 (CRRSP25).